A 278-amino-acid polypeptide reads, in one-letter code: Non-heme chloroperoxidase (278 aa).

The AB hydrolase-1 domain maps to 24-259 (PIVFHHGWPL…LKTYPGYSHG (236 aa)). Active-site residues include Ser-97, Asp-229, and His-258.

It belongs to the AB hydrolase superfamily. Bacterial non-heme haloperoxidase / perhydrolase family. As to quaternary structure, homodimer.

Chlorinates and brominates suitable organic compounds. Involved in the biosynthesis of the antibiotic pyrrolnitrin. In Burkholderia pyrrocinia (Pseudomonas pyrrocinia), this protein is Non-heme chloroperoxidase (cpo).